We begin with the raw amino-acid sequence, 339 residues long: GTP 3',8-cyclase (339 aa).

A Radical SAM core domain is found at 13–249 (RYGRPLRDLR…GEVAQRHAFA (237 aa)). Arg22 contacts GTP. [4Fe-4S] cluster is bound by residues Cys29 and Cys33. Residue Tyr35 coordinates S-adenosyl-L-methionine. Residue Cys36 coordinates [4Fe-4S] cluster. Arg75 contributes to the GTP binding site. Gly79 lines the S-adenosyl-L-methionine pocket. Thr106 serves as a coordination point for GTP. Ser130 serves as a coordination point for S-adenosyl-L-methionine. Lys168 contacts GTP. Position 202 (Met202) interacts with S-adenosyl-L-methionine. Residues Cys266 and Cys269 each coordinate [4Fe-4S] cluster. Position 271-273 (271-273 (RAR)) interacts with GTP. Residue Cys283 coordinates [4Fe-4S] cluster.

It belongs to the radical SAM superfamily. MoaA family. In terms of assembly, monomer and homodimer. [4Fe-4S] cluster is required as a cofactor.

The catalysed reaction is GTP + AH2 + S-adenosyl-L-methionine = (8S)-3',8-cyclo-7,8-dihydroguanosine 5'-triphosphate + 5'-deoxyadenosine + L-methionine + A + H(+). Its pathway is cofactor biosynthesis; molybdopterin biosynthesis. In terms of biological role, catalyzes the cyclization of GTP to (8S)-3',8-cyclo-7,8-dihydroguanosine 5'-triphosphate. This is GTP 3',8-cyclase from Xanthomonas campestris pv. campestris (strain B100).